The primary structure comprises 633 residues: Lysophospholipase 1 (633 aa).

The signal sequence occupies residues 1 to 20; sequence MKTTTVACAVAGLLFSCVSG. In terms of domain architecture, PLA2c spans 47-594; sequence GCPASRPTIR…QRYCWDGSLN (548 aa). 18 N-linked (GlcNAc...) asparagine glycosylation sites follow: Asn-64, Asn-104, Asn-139, Asn-173, Asn-246, Asn-290, Asn-329, Asn-358, Asn-397, Asn-450, Asn-463, Asn-469, Asn-497, Asn-500, Asn-521, Asn-549, Asn-555, and Asn-594. The GPI-like-anchor amidated serine moiety is linked to residue Ser-609. Residues 610-633 constitute a propeptide, removed in mature form; sequence AASGIIPSISTVAMAVVFAAWTIF.

Belongs to the lysophospholipase family. The GPI-like anchor contains a phosphoceramide lipid group. The anchor position has not been determined.

Its subcellular location is the cell membrane. The catalysed reaction is a 1-acyl-sn-glycero-3-phosphocholine + H2O = sn-glycerol 3-phosphocholine + a fatty acid + H(+). Functionally, catalyzes the release of fatty acids from lysophospholipids. The polypeptide is Lysophospholipase 1 (plb1) (Aspergillus fumigatus (strain CBS 144.89 / FGSC A1163 / CEA10) (Neosartorya fumigata)).